The sequence spans 247 residues: Nodulation protein H (247 aa).

The tract at residues 1–16 (MTHSTLPPRPFAILAM) is hydrophobic.

Its function is as follows. Required for the formation of sulfated nod factor. Proposed to transfer activated sulfate (PAPS) to a N-acetylglucosamine of the nod factor. In Rhizobium meliloti (Ensifer meliloti), this protein is Nodulation protein H (nodH).